Consider the following 113-residue polypeptide: Probable protein L3 (113 aa).

In Bos taurus (Bovine), this protein is Probable protein L3.